Here is a 50-residue protein sequence, read N- to C-terminus: Putative protein HokF (50 aa).

A helical transmembrane segment spans residues 5-25; the sequence is YALVAVIVLCLTVPGFTLLVG.

Belongs to the Hok/Gef family.

It is found in the cell inner membrane. In terms of biological role, toxic component of a type I toxin-antitoxin (TA) system. When overexpressed kills cells within minutes; causes collapse of the transmembrane potential and arrest of respiration. Its toxic effect is probably neutralized by an antisense antitoxin Sok RNA. This chain is Putative protein HokF (hokF), found in Escherichia coli O157:H7.